The chain runs to 187 residues: UPF0301 protein HS_0009 (187 aa).

Belongs to the UPF0301 (AlgH) family.

The protein is UPF0301 protein HS_0009 of Histophilus somni (strain 129Pt) (Haemophilus somnus).